Here is a 442-residue protein sequence, read N- to C-terminus: Putative zinc metalloprotease PM1991 (442 aa).

His-21 provides a ligand contact to Zn(2+). Glu-22 is an active-site residue. Residue His-25 coordinates Zn(2+). The chain crosses the membrane as a helical span at residues Ala-97–Tyr-119. The PDZ domain maps to Asp-198–Leu-286. Helical transmembrane passes span Ile-366–Phe-388 and Leu-418–Leu-440.

The protein belongs to the peptidase M50B family. Requires Zn(2+) as cofactor.

Its subcellular location is the cell inner membrane. This is Putative zinc metalloprotease PM1991 from Pasteurella multocida (strain Pm70).